Here is a 131-residue protein sequence, read N- to C-terminus: uncharacterized protein (131 aa).

The next 2 membrane-spanning stretches (helical) occupy residues 5–25 (VQPIIAVLIALGAFGFLYVLV) and 34–54 (MAVTVIVAGIIIYFIVKYVMN). A disordered region spans residues 62-131 (AAFKKAAKQS…KNKKKNRALF (70 aa)). 2 stretches are compositionally biased toward basic residues: residues 66–92 (KAAKQSRRRMKEQKAKHRAGHKGRVSH) and 122–131 (KNKKKNRALF).

The protein resides in the cell membrane. This is an uncharacterized protein from Bacillus subtilis (strain 168).